The primary structure comprises 736 residues: MQWTPEHAQWAEQHFDISSTTRSLAHKAEAYRGHLQRTYQYAWANDDISALTASNLLKKYAEKYSGILEGPSERALLCSYSESAPGLLNGRKSESDAWQEGIYPMSCAADVISASKTGMTPALPPPDVTASVGSSTGVASSLSEPSYSSSNCGNHASALHSGIPSQEFASSYNGSYLHSTYSGGQSTPALPSPHPSPLHSAGLLQPPPPPPPTLVPSYNTSSPNLSSYNYPPAGYPPQTPVAPGYSPGGAPPPSAYLPSGIAAPTPLPPSTIPGYSYQSHNHAPIAPTPLNGSSANTLKRKAFYMTGQGDMDSSYGNFNYSQQRSAQSPMYRMPDNSLVDSTRGNGFDRNADTSSLAFKPTKQSMPTDQQRKFGSQAGRALTPPSYGSSKGSLGSMRSGESFGKFGSPVMSDHGDDSRQHLPHSIDTATSSSHPAEEQLKNSDANLVEMVTTEILQQTSPVDWSDIAGLEMAKATIKDEVLWPILRPDMFSGLATLPRSILLFGPQGTGRTLLGRCMASQLGAAFLLLSGSALVTKWLGEGEKIVQASFLIARCRQPSVVFISDVDLLLSSQLSEESPVNRIKSELLLQLDGVLSSPEEHVLVVCSTSKPEEIDESLRRYFVKRLLVPLPDATARHQIISQLLSQHNYCLSDKEVTLLVQRTDGFSGLDVVRLCQEALVGPLHGMPGADLSGMIPGQMRPVSYQDFENVFCKIQPSISQKELDTYTEWNKMFGCSQ.

Disordered regions lie at residues 118–155, 180–248, 272–295, and 341–438; these read GMTP…CGNH, TYSG…YSPG, IPGY…GSSA, and STRG…AEEQ. A compositionally biased stretch (low complexity) spans 128–150; sequence VTASVGSSTGVASSLSEPSYSSS. A compositionally biased stretch (pro residues) spans 205-214; that stretch reads QPPPPPPPTL. The segment covering 216–232 has biased composition (low complexity); the sequence is PSYNTSSPNLSSYNYPP. Positions 352 to 368 are enriched in polar residues; sequence DTSSLAFKPTKQSMPTD. Residues alanine 467 and 507 to 512 contribute to the ATP site; that span reads GTGRTL.

The protein belongs to the AAA ATPase family.

Its subcellular location is the nucleus matrix. It localises to the cytoplasm. The protein localises to the cytoskeleton. It is found in the microtubule organizing center. The protein resides in the centrosome. Functionally, ATP-dependent microtubule severing protein. Severs microtubules along their length and depolymerizes their ends, primarily the minus-end, suppressing microtubule growth from and attachment to centrosomes. Microtubule severing may promote rapid reorganization of cellular microtubule arrays and the release of microtubules from the centrosome following nucleation. Microtubule release from the mitotic spindle poles may allow depolymerization of the microtubule end proximal to the spindle pole, leading to poleward microtubule flux and poleward motion of chromosome. The protein is Fidgetin (fign) of Danio rerio (Zebrafish).